The sequence spans 259 residues: 5'-nucleotidase SurE (259 aa).

Residues aspartate 8, aspartate 9, serine 40, and asparagine 92 each contribute to the a divalent metal cation site.

It belongs to the SurE nucleotidase family. It depends on a divalent metal cation as a cofactor.

It is found in the cytoplasm. The enzyme catalyses a ribonucleoside 5'-phosphate + H2O = a ribonucleoside + phosphate. In terms of biological role, nucleotidase that shows phosphatase activity on nucleoside 5'-monophosphates. This is 5'-nucleotidase SurE from Xanthomonas campestris pv. campestris (strain 8004).